Here is a 258-residue protein sequence, read N- to C-terminus: Exosome complex component Rrp41 (258 aa).

It belongs to the RNase PH family. Rrp41 subfamily. In terms of assembly, component of the archaeal exosome complex. Forms a hexameric ring-like arrangement composed of 3 Rrp41-Rrp42 heterodimers. The hexameric ring associates with a trimer of Rrp4 and/or Csl4 subunits.

It localises to the cytoplasm. Functionally, catalytic component of the exosome, which is a complex involved in RNA degradation. Has 3'-&gt;5' exoribonuclease activity. Can also synthesize heteromeric RNA-tails. This Archaeoglobus fulgidus (strain ATCC 49558 / DSM 4304 / JCM 9628 / NBRC 100126 / VC-16) protein is Exosome complex component Rrp41.